We begin with the raw amino-acid sequence, 302 residues long: Lysosomal thioesterase PPT2 (302 aa).

The N-terminal stretch at 1–27 (MPGLWRQRLPSAWALLLLPFLPLLMPA) is a signal peptide. A glycan (N-linked (GlcNAc...) asparagine) is linked at Asn-60. Disulfide bonds link Cys-109/Cys-117 and Cys-165/Cys-176. Ser-111 acts as the Nucleophile in catalysis. Asn-190 and Asn-206 each carry an N-linked (GlcNAc...) asparagine glycan. The active site involves Asp-228. Asn-245 is a glycosylation site (N-linked (GlcNAc...) asparagine). A disulfide bridge links Cys-276 with Cys-296. His-283 is a catalytic residue. Asn-289 is a glycosylation site (N-linked (GlcNAc...) asparagine).

This sequence belongs to the palmitoyl-protein thioesterase family. In terms of tissue distribution, expressed throughout the brain, primarily in neurons, and at lower levels in glial cells.

The protein localises to the lysosome. The catalysed reaction is hexadecanoyl-CoA + H2O = hexadecanoate + CoA + H(+). It carries out the reaction S-hexadecanoyl-N-acetylcysteamine + H2O = N-acetylcysteamine + hexadecanoate + H(+). In terms of biological role, catalyzes the cleavage of thioester bonds from S-palmitoyl-CoA or S-palmitoyl-N-acetylcysteamine (unbranched structures) but does not have activity against palmitoylcysteine or palmitoylated proteins, branched structures or bulky head groups. Conversely, hydrolyzes both long and short chain fatty acyl-CoA substrate. This Mus musculus (Mouse) protein is Lysosomal thioesterase PPT2 (Ppt2).